A 263-amino-acid chain; its full sequence is Acyl-[acyl-carrier-protein]--UDP-N-acetylglucosamine O-acyltransferase (263 aa).

This sequence belongs to the transferase hexapeptide repeat family. LpxA subfamily. As to quaternary structure, homotrimer.

Its subcellular location is the cytoplasm. It carries out the reaction a (3R)-hydroxyacyl-[ACP] + UDP-N-acetyl-alpha-D-glucosamine = a UDP-3-O-[(3R)-3-hydroxyacyl]-N-acetyl-alpha-D-glucosamine + holo-[ACP]. The protein operates within glycolipid biosynthesis; lipid IV(A) biosynthesis; lipid IV(A) from (3R)-3-hydroxytetradecanoyl-[acyl-carrier-protein] and UDP-N-acetyl-alpha-D-glucosamine: step 1/6. In terms of biological role, involved in the biosynthesis of lipid A, a phosphorylated glycolipid that anchors the lipopolysaccharide to the outer membrane of the cell. The chain is Acyl-[acyl-carrier-protein]--UDP-N-acetylglucosamine O-acyltransferase from Campylobacter jejuni subsp. jejuni serotype O:23/36 (strain 81-176).